A 458-amino-acid chain; its full sequence is Glutamyl-tRNA reductase (458 aa).

Substrate-binding positions include 49 to 52 (TCNR), S111, 116 to 118 (ETE), and Q122. Catalysis depends on C50, which acts as the Nucleophile. NADP(+) is bound at residue 191-196 (GAGKMS). Composition is skewed to basic and acidic residues over residues 426–440 (IPKDGEEHSSSKEVE) and 448–458 (ERGHHESDFHN). Positions 426 to 458 (IPKDGEEHSSSKEVESVTQSSTERGHHESDFHN) are disordered.

The protein belongs to the glutamyl-tRNA reductase family. In terms of assembly, homodimer.

It catalyses the reaction (S)-4-amino-5-oxopentanoate + tRNA(Glu) + NADP(+) = L-glutamyl-tRNA(Glu) + NADPH + H(+). It participates in porphyrin-containing compound metabolism; protoporphyrin-IX biosynthesis; 5-aminolevulinate from L-glutamyl-tRNA(Glu): step 1/2. Its function is as follows. Catalyzes the NADPH-dependent reduction of glutamyl-tRNA(Glu) to glutamate 1-semialdehyde (GSA). The chain is Glutamyl-tRNA reductase from Natranaerobius thermophilus (strain ATCC BAA-1301 / DSM 18059 / JW/NM-WN-LF).